We begin with the raw amino-acid sequence, 59 residues long: Large ribosomal subunit protein bL32 (59 aa).

Residues 1 to 16 are compositionally biased toward basic residues; the sequence is MAVPKRKTSPSRRGMR. The tract at residues 1–59 is disordered; the sequence is MAVPKRKTSPSRRGMRRSADALKAPTYVEDKNSGELRRPHHIDLKSGMYRGRQVLEPKE. The span at 28-44 shows a compositional bias: basic and acidic residues; that stretch reads VEDKNSGELRRPHHIDL.

Belongs to the bacterial ribosomal protein bL32 family.

The polypeptide is Large ribosomal subunit protein bL32 (Brucella abortus (strain S19)).